The primary structure comprises 61 residues: Large ribosomal subunit protein bL28 (61 aa).

It belongs to the bacterial ribosomal protein bL28 family.

The chain is Large ribosomal subunit protein bL28 from Geobacillus kaustophilus (strain HTA426).